The chain runs to 278 residues: Urease accessory protein UreD 1 (278 aa).

It belongs to the UreD family. As to quaternary structure, ureD, UreF and UreG form a complex that acts as a GTP-hydrolysis-dependent molecular chaperone, activating the urease apoprotein by helping to assemble the nickel containing metallocenter of UreC. The UreE protein probably delivers the nickel.

The protein resides in the cytoplasm. In terms of biological role, required for maturation of urease via the functional incorporation of the urease nickel metallocenter. The polypeptide is Urease accessory protein UreD 1 (Bradyrhizobium sp. (strain ORS 278)).